Consider the following 81-residue polypeptide: Conotoxin ViKr92 (81 aa).

Residues 1-22 (MKLTWMMIVAVLFLTAWTFVTA) form the signal peptide. The propeptide occupies 23–51 (DDTRYKLENPFLKARNELQKLEASQLNER). Intrachain disulfides connect C53–C70, C60–C74, and C69–C78.

The protein belongs to the conotoxin O1 superfamily. As to expression, expressed by the venom duct.

Its subcellular location is the secreted. In Conus virgo (Virgin cone), this protein is Conotoxin ViKr92.